Here is a 171-residue protein sequence, read N- to C-terminus: S-ribosylhomocysteine lyase (171 aa).

3 residues coordinate Fe cation: His54, His58, and Cys128.

Belongs to the LuxS family. In terms of assembly, homodimer. The cofactor is Fe cation.

The enzyme catalyses S-(5-deoxy-D-ribos-5-yl)-L-homocysteine = (S)-4,5-dihydroxypentane-2,3-dione + L-homocysteine. In terms of biological role, involved in the synthesis of autoinducer 2 (AI-2) which is secreted by bacteria and is used to communicate both the cell density and the metabolic potential of the environment. The regulation of gene expression in response to changes in cell density is called quorum sensing. Catalyzes the transformation of S-ribosylhomocysteine (RHC) to homocysteine (HC) and 4,5-dihydroxy-2,3-pentadione (DPD). The chain is S-ribosylhomocysteine lyase from Aliarcobacter butzleri (strain RM4018) (Arcobacter butzleri).